The sequence spans 119 residues: Protein phosphatase EYA4 (119 aa).

It belongs to the HAD-like hydrolase superfamily. EYA family. Mg(2+) is required as a cofactor.

The protein localises to the cytoplasm. Its subcellular location is the nucleus. It carries out the reaction O-phospho-L-tyrosyl-[protein] + H2O = L-tyrosyl-[protein] + phosphate. Its function is as follows. Tyrosine phosphatase that specifically dephosphorylates 'Tyr-142' of histone H2AX (H2AXY142ph). 'Tyr-142' phosphorylation of histone H2AX plays a central role in DNA repair and acts as a mark that distinguishes between apoptotic and repair responses to genotoxic stress. Promotes efficient DNA repair by dephosphorylating H2AX, promoting the recruitment of DNA repair complexes containing MDC1. Its function as histone phosphatase probably explains its role in transcription regulation during organogenesis. May be involved in development of the eye. In Gallus gallus (Chicken), this protein is Protein phosphatase EYA4 (EYA4).